The sequence spans 75 residues: Brevinin-2SN2 (75 aa).

Positions 1–22 (MFTLKKPLLFLFFLGTISLSFC) are cleaved as a signal peptide. A propeptide spans 23–40 (EEERGADEDDGGEMTEEE) (removed in mature form). An intrachain disulfide couples Cys-69 to Cys-75.

It belongs to the frog skin active peptide (FSAP) family. Brevinin subfamily. In terms of tissue distribution, expressed by the skin glands.

It localises to the secreted. Functionally, antimicrobial peptide. Active against some Gram-negative and a variety of Gram-positive bacterial strains. Active against fungus C.glabrata 090902 but not against C.albicans ATCC 10231. Shows hemolytic activity against human erythrocytes. The polypeptide is Brevinin-2SN2 (Sylvirana spinulosa (Fine-spined frog)).